Consider the following 78-residue polypeptide: Metallothionein-like protein type 2 (78 aa).

It belongs to the metallothionein superfamily. Type 15 family.

Its function is as follows. Metallothioneins have a high content of cysteine residues that bind various heavy metals. In Nicotiana glutinosa (Tobacco), this protein is Metallothionein-like protein type 2.